The following is a 224-amino-acid chain: Mannose-specific lectin 3 (224 aa).

Bulb-type lectin domains lie at 2–111 (NNVL…PAAA) and 117–222 (RNVL…VWST). 2 disulfides stabilise this stretch: C30–C52 and C145–C170.

Heterotetramer of 2 domain 1 and 2 domain 2 chains arranged as a dimer of domain 1/domain 2 heterodimers.

Mannose-specific lectin. Has weak agglutinating activity towards trypsin-treated erythrocytes from rabbit but not from human. This is Mannose-specific lectin 3 from Crocus vernus (Dutch crocus).